Consider the following 315-residue polypeptide: tRNA uridine(34) hydroxylase (315 aa).

Residues 122-223 (SDPDVLVIDT…YLEQIPQPES (102 aa)) enclose the Rhodanese domain. Residue C183 is the Cysteine persulfide intermediate of the active site.

The protein belongs to the TrhO family.

It catalyses the reaction uridine(34) in tRNA + AH2 + O2 = 5-hydroxyuridine(34) in tRNA + A + H2O. In terms of biological role, catalyzes oxygen-dependent 5-hydroxyuridine (ho5U) modification at position 34 in tRNAs. The polypeptide is tRNA uridine(34) hydroxylase (Caulobacter vibrioides (strain ATCC 19089 / CIP 103742 / CB 15) (Caulobacter crescentus)).